The sequence spans 45 residues: MDVNFLLSALPEPYAAFRPIVDVMPAIPVFFLLLAFVWQASVGFR.

A propeptide spanning residues 1–8 (MDVNFLLS) is cleaved from the precursor. A helical transmembrane segment spans residues 20–40 (IVDVMPAIPVFFLLLAFVWQA).

Belongs to the PsbK family. In terms of assembly, PSII is composed of 1 copy each of membrane proteins PsbA, PsbB, PsbC, PsbD, PsbE, PsbF, PsbH, PsbI, PsbJ, PsbK, PsbL, PsbM, PsbT, PsbX, PsbY, PsbZ, Psb30/Ycf12, at least 3 peripheral proteins of the oxygen-evolving complex and a large number of cofactors. It forms dimeric complexes.

Its subcellular location is the plastid. It localises to the chloroplast thylakoid membrane. Its function is as follows. One of the components of the core complex of photosystem II (PSII). PSII is a light-driven water:plastoquinone oxidoreductase that uses light energy to abstract electrons from H(2)O, generating O(2) and a proton gradient subsequently used for ATP formation. It consists of a core antenna complex that captures photons, and an electron transfer chain that converts photonic excitation into a charge separation. The polypeptide is Photosystem II reaction center protein K (Emiliania huxleyi (Coccolithophore)).